Consider the following 345-residue polypeptide: Phosphate acyltransferase (345 aa).

The protein belongs to the PlsX family. As to quaternary structure, homodimer. Probably interacts with PlsY.

The protein resides in the cytoplasm. It catalyses the reaction a fatty acyl-[ACP] + phosphate = an acyl phosphate + holo-[ACP]. It participates in lipid metabolism; phospholipid metabolism. In terms of biological role, catalyzes the reversible formation of acyl-phosphate (acyl-PO(4)) from acyl-[acyl-carrier-protein] (acyl-ACP). This enzyme utilizes acyl-ACP as fatty acyl donor, but not acyl-CoA. The chain is Phosphate acyltransferase from Chromobacterium violaceum (strain ATCC 12472 / DSM 30191 / JCM 1249 / CCUG 213 / NBRC 12614 / NCIMB 9131 / NCTC 9757 / MK).